A 66-amino-acid chain; its full sequence is Large ribosomal subunit protein bL33c (66 aa).

The protein belongs to the bacterial ribosomal protein bL33 family.

Its subcellular location is the plastid. It is found in the chloroplast. This Helianthus annuus (Common sunflower) protein is Large ribosomal subunit protein bL33c.